The primary structure comprises 711 residues: Receptor-like protein 43 (711 aa).

The signal sequence occupies residues 1–30 (MKGFWNSKSTIRITLSFIFLFISQFSDVLA). Over 31–666 (APTRHLCRPE…EDEEVISWIA (636 aa)) the chain is Extracellular. Residues asparagine 78, asparagine 114, asparagine 143, asparagine 167, and asparagine 191 are each glycosylated (N-linked (GlcNAc...) asparagine). 8 LRR repeats span residues 120-143 (LHFLTTLDLSFNDFKGQIMSSIEN), 144-168 (LSHLTYLDLSFNHFSGQVPSSIGNL), 170-192 (HLTFLDLYCNQFSGQVPSSIGNL), 193-216 (SHLTTLELSFNRFFGQFPSSIGGL), 218-240 (HLTTLNLFVNNFLGQIPSSIGNL), 241-266 (SNLTSLYLCKNNFSGQIPSFIGNLSQ), 268-288 (TRLDLSSNNFFGEIPGWLWTL), and 289-316 (PNLFYVNLSYNTFIGFQRPNKPEPSMGH). 4 N-linked (GlcNAc...) asparagine glycosylation sites follow: asparagine 239, asparagine 242, asparagine 252, and asparagine 263. N-linked (GlcNAc...) asparagine glycosylation is found at asparagine 295, asparagine 323, asparagine 347, asparagine 362, and asparagine 372. The LRR 9; degenerate repeat unit spans residues 317–334 (LLGSNNNFTGKIPSFICE). LRR repeat units follow at residues 335–358 (LRSLETLDLSDNNFSGLIPRCMGN), 360–384 (KSNLSHLNLRQNNLSGGLPKHIFEI), 386–406 (RSLDVGHNQLVGKLPRSLRFF), 407–430 (STLEVLNVESNRINDTFPFWLTSL), 431–452 (PKLQVLVLRSNAFHGPIHEASF), 453–476 (LKLRIIDISHNHFNGTLPSDYFVK), 519–543 (LTIYTALDFSGNKFEGEIPKSIGLL), 544–567 (KELLVLNLSNNAFTGHIPSSMGKL), 568–591 (TALESLDVSQNKLYGEIPQEIGNL), and 593–616 (FLSCMNFSHNQLAGLVPGGQQFLT). Residue asparagine 420 is glycosylated (N-linked (GlcNAc...) asparagine). Residue asparagine 466 is glycosylated (N-linked (GlcNAc...) asparagine). N-linked (GlcNAc...) asparagine glycans are attached at residues asparagine 550, asparagine 590, and asparagine 598. The helical transmembrane segment at 667-687 (AAIGFIPGIVLGLTIGYILVF) threads the bilayer. Topologically, residues 688–711 (YKPEWFIKTFGRNNCRRRSTTTTH) are cytoplasmic.

The protein belongs to the RLP family.

It localises to the cell membrane. This is Receptor-like protein 43 from Arabidopsis thaliana (Mouse-ear cress).